Consider the following 723-residue polypeptide: Peroxisomal bifunctional enzyme (723 aa).

The enoyl-CoA hydratase / isomerase stretch occupies residues 1 to 282; the sequence is MAEYTRLHNA…LAERKANKWS (282 aa). N6-succinyllysine is present on lysine 38. Residue glycine 101 participates in substrate binding. Position 165 is an N6-acetyllysine; alternate (lysine 165). Lysine 165 carries the N6-succinyllysine; alternate modification. Lysine 171 is subject to N6-acetyllysine. Lysine 219 carries the post-translational modification N6-acetyllysine; alternate. The residue at position 219 (lysine 219) is an N6-succinyllysine; alternate. The residue at position 250 (lysine 250) is an N6-acetyllysine. 2 positions are modified to N6-succinyllysine: lysine 280 and lysine 290. The interval 283 to 572 is 3-hydroxyacyl-CoA dehydrogenase; it reads TPSGASWKTA…DVLCELGRFG (290 aa). An N6-acetyllysine mark is found at lysine 346, lysine 350, and lysine 464. Lysine 532 is subject to N6-succinyllysine. Threonine 548 carries the post-translational modification Phosphothreonine. Position 577 is an N6-succinyllysine (lysine 577). N6-acetyllysine; alternate occurs at positions 584, 591, and 710. Residues lysine 584, lysine 591, and lysine 710 each carry the N6-succinyllysine; alternate modification. The tract at residues 699 to 723 is disordered; sequence KKLASQGNPPQKEWQSLAGSPSSKL. The span at 703–723 shows a compositional bias: polar residues; sequence SQGNPPQKEWQSLAGSPSSKL. Residue serine 718 is modified to Phosphoserine. Residues 721–723 carry the Microbody targeting signal motif; sequence SKL. Lysine 722 is subject to N6-succinyllysine.

In the N-terminal section; belongs to the enoyl-CoA hydratase/isomerase family. This sequence in the C-terminal section; belongs to the 3-hydroxyacyl-CoA dehydrogenase family. Monomer. In terms of processing, acetylated, leading to enhanced enzyme activity. Acetylation is enhanced by up to 80% after treatment either with trichostin A (TSA) or with nicotinamide (NAM) with highest increase on Lys-346. Acetylation and enzyme activity increased by about 1.5% on addition of fatty acids.

It is found in the peroxisome. The enzyme catalyses a (3S)-3-hydroxyacyl-CoA = a (2E)-enoyl-CoA + H2O. It carries out the reaction a 4-saturated-(3S)-3-hydroxyacyl-CoA = a (3E)-enoyl-CoA + H2O. It catalyses the reaction a (3Z)-enoyl-CoA = a 4-saturated (2E)-enoyl-CoA. The catalysed reaction is a (3E)-enoyl-CoA = a 4-saturated (2E)-enoyl-CoA. The enzyme catalyses a (3S)-3-hydroxyacyl-CoA + NAD(+) = a 3-oxoacyl-CoA + NADH + H(+). It carries out the reaction (2S,3S)-3-hydroxy-2-methylbutanoyl-CoA = (2E)-2-methylbut-2-enoyl-CoA + H2O. It catalyses the reaction (3S)-hydroxyhexadecanoyl-CoA + NAD(+) = 3-oxohexadecanoyl-CoA + NADH + H(+). The catalysed reaction is (3S)-hydroxyhexadecanoyl-CoA = (2E)-hexadecenoyl-CoA + H2O. The enzyme catalyses (2E)-hexadecenedioyl-CoA + H2O = (3S)-hydroxyhexadecanedioyl-CoA. It carries out the reaction (3S)-hydroxyhexadecanedioyl-CoA + NAD(+) = 3-oxohexadecanedioyl-CoA + NADH + H(+). It catalyses the reaction (3E,5Z)-tetradecadienoyl-CoA = (2E,5Z)-tetradecadienoyl-CoA. The catalysed reaction is (3E,5Z)-octadienoyl-CoA = (2E,5Z)-octadienoyl-CoA. The enzyme catalyses (3S)-hydroxydecanoyl-CoA + NAD(+) = 3-oxodecanoyl-CoA + NADH + H(+). It carries out the reaction (3E)-decenoyl-CoA = (2E)-decenoyl-CoA. It catalyses the reaction (3Z)-hexenoyl-CoA = (2E)-hexenoyl-CoA. The catalysed reaction is (3E)-hexenoyl-CoA = (2E)-hexenoyl-CoA. The enzyme catalyses (3S)-hydroxydecanoyl-CoA = (2E)-decenoyl-CoA + H2O. It carries out the reaction (3S)-hydroxyhexanoyl-CoA = (2E)-hexenoyl-CoA + H2O. It functions in the pathway lipid metabolism; fatty acid beta-oxidation. Its activity is regulated as follows. Enzyme activity enhanced by acetylation. In terms of biological role, peroxisomal trifunctional enzyme possessing 2-enoyl-CoA hydratase, 3-hydroxyacyl-CoA dehydrogenase, and delta 3, delta 2-enoyl-CoA isomerase activities. Catalyzes two of the four reactions of the long chain fatty acids peroxisomal beta-oxidation pathway. Can also use branched-chain fatty acids such as 2-methyl-2E-butenoyl-CoA as a substrate, which is hydrated into (2S,3S)-3-hydroxy-2-methylbutanoyl-CoA. Optimal isomerase for 2,5 double bonds into 3,5 form isomerization in a range of enoyl-CoA species. Also able to isomerize both 3-cis and 3-trans double bonds into the 2-trans form in a range of enoyl-CoA species. Regulates the amount of medium-chain dicarboxylic fatty acids which are essential regulators of all fatty acid oxidation pathways. Also involved in the degradation of long-chain dicarboxylic acids through peroxisomal beta-oxidation. This Pongo abelii (Sumatran orangutan) protein is Peroxisomal bifunctional enzyme (EHHADH).